The sequence spans 476 residues: 23S rRNA (uracil(1939)-C(5))-methyltransferase RlmD (476 aa).

Residues 1–55 enclose the TRAM domain; that stretch reads MVDEVLKIESLDLEARGIARRDGKVVFVEGALPGERVYAATVRRKPSYEIARVET. [4Fe-4S] cluster contacts are provided by cysteine 68, cysteine 74, cysteine 77, and cysteine 156. S-adenosyl-L-methionine-binding residues include glutamine 265, phenylalanine 294, asparagine 299, glutamate 315, asparagine 343, and aspartate 364. Cysteine 394 (nucleophile) is an active-site residue.

Belongs to the class I-like SAM-binding methyltransferase superfamily. RNA M5U methyltransferase family. RlmD subfamily.

The enzyme catalyses uridine(1939) in 23S rRNA + S-adenosyl-L-methionine = 5-methyluridine(1939) in 23S rRNA + S-adenosyl-L-homocysteine + H(+). Its function is as follows. Catalyzes the formation of 5-methyl-uridine at position 1939 (m5U1939) in 23S rRNA. This chain is 23S rRNA (uracil(1939)-C(5))-methyltransferase RlmD, found in Bordetella avium (strain 197N).